The sequence spans 480 residues: Phosphoglucosamine mutase (480 aa).

The tract at residues 1-41 is disordered; sequence MPKHTKKDPREGAPSATGEPQKQAAGRKLFGTDGVRGVANQ. Ser127 serves as the catalytic Phosphoserine intermediate. Mg(2+) is bound by residues Ser127, Asp269, Asp271, and Asp273. Position 127 is a phosphoserine (Ser127).

Belongs to the phosphohexose mutase family. Mg(2+) serves as cofactor. Post-translationally, activated by phosphorylation.

The catalysed reaction is alpha-D-glucosamine 1-phosphate = D-glucosamine 6-phosphate. Its function is as follows. Catalyzes the conversion of glucosamine-6-phosphate to glucosamine-1-phosphate. The chain is Phosphoglucosamine mutase from Sorangium cellulosum (strain So ce56) (Polyangium cellulosum (strain So ce56)).